The primary structure comprises 943 residues: UvrABC system protein A (943 aa).

31-38 (GLSGSGKS) provides a ligand contact to ATP. The C4-type zinc-finger motif lies at 253 to 280 (CPHCGYSVPELEPRLFSFNNPAGACPTC). ABC transporter domains are found at residues 310–587 (WDRR…PHSI) and 607–937 (LDKK…RFLK). Position 640–647 (640–647 (GVSGSGKS)) interacts with ATP. The C4-type zinc finger occupies 740 to 766 (CEACQGDGVIKVEMHFLPDVYVPCEQC).

This sequence belongs to the ABC transporter superfamily. UvrA family. As to quaternary structure, forms a heterotetramer with UvrB during the search for lesions.

The protein resides in the cytoplasm. The UvrABC repair system catalyzes the recognition and processing of DNA lesions. UvrA is an ATPase and a DNA-binding protein. A damage recognition complex composed of 2 UvrA and 2 UvrB subunits scans DNA for abnormalities. When the presence of a lesion has been verified by UvrB, the UvrA molecules dissociate. The sequence is that of UvrABC system protein A from Pasteurella multocida (strain Pm70).